The chain runs to 203 residues: Mitotic spindle checkpoint component mad2 (203 aa).

An HORMA domain is found at K13–V197.

It belongs to the MAD2 family. As to quaternary structure, interacts with mad3 and slp1.

The protein resides in the nucleus. Feedback control that prevents cells with incompletely assembled spindles from leaving mitosis. It interacts with the anaphase promoting complex/cyclosome (APC/C) thereby inhibiting APC/C-dependent proteolysis, a step required for exit from mitosis. The protein is Mitotic spindle checkpoint component mad2 of Schizosaccharomyces pombe (strain 972 / ATCC 24843) (Fission yeast).